Here is a 335-residue protein sequence, read N- to C-terminus: NmrA-like family domain-containing oxidoreductase lnbB (335 aa).

NADP(+) contacts are provided by residues 14 to 18, 41 to 45, 62 to 63, 83 to 85, Lys142, and 166 to 169; these read GTGNQ, RHPDS, DG, TNS, and YYEQ.

It belongs to the NmrA-type oxidoreductase family.

Its pathway is secondary metabolite biosynthesis. NmrA-like family domain-containing oxidoreductase; part of the lnb gene cluster that mediates the biosynthesis of diastereomeric piperazines. Lna and lnb clusters encode sets of enzymes that produce overlapping sets of previously undescribed metabolites such as piperazinomycin-like metabolites or morpholine. The lna and lnb biosynthetic pathways appear to be part of a signaling network that controls the formation of sclerotia, a resilient overwintering structure. One primary function of the non-canonical nonribosomal peptide synthetases lnaA and lnbA consists in the reduction of L-tyrosine. The presence in the clusters of tailoring enzymes such as the oxidoreductases lnaB, lnbB, lnaE or lnbE, as well as of the cytochrome P450 monooxygenases lnaC, lnaD, or lnbC, might explain formation of various diastereomeric piperazines. In Aspergillus flavus (strain ATCC 200026 / FGSC A1120 / IAM 13836 / NRRL 3357 / JCM 12722 / SRRC 167), this protein is NmrA-like family domain-containing oxidoreductase lnbB.